We begin with the raw amino-acid sequence, 698 residues long: tRNA (guanine(37)-N(1))-methyltransferase (698 aa).

Residues 233-254 form a disordered region; it reads DSTAHDSVQRNEGKTPKGPLDG. Residues 234–247 show a composition bias toward basic and acidic residues; it reads STAHDSVQRNEGKT. Residues Arg394, 432-433, and 459-460 each bind S-adenosyl-L-methionine; these read DI and DA. Disordered stretches follow at residues 500 to 522 and 534 to 582; these read PDQN…GHVD and KKKL…DAPR. 3 stretches are compositionally biased toward basic and acidic residues: residues 513–522, 539–550, and 569–582; these read RESDRVGHVD, HADTNDPLEERP, and TNND…DAPR. Asn603 lines the S-adenosyl-L-methionine pocket.

Belongs to the class I-like SAM-binding methyltransferase superfamily. TRM5/TYW2 family. In terms of assembly, monomer.

It is found in the mitochondrion matrix. Its subcellular location is the nucleus. The protein localises to the cytoplasm. The catalysed reaction is guanosine(37) in tRNA + S-adenosyl-L-methionine = N(1)-methylguanosine(37) in tRNA + S-adenosyl-L-homocysteine + H(+). Functionally, specifically methylates the N1 position of guanosine-37 in various cytoplasmic and mitochondrial tRNAs. Methylation is not dependent on the nature of the nucleoside 5' of the target nucleoside. This is the first step in the biosynthesis of wybutosine (yW), a modified base adjacent to the anticodon of tRNAs and required for accurate decoding. This Plasmodium knowlesi (strain H) protein is tRNA (guanine(37)-N(1))-methyltransferase.